The chain runs to 254 residues: NAD-dependent protein deacylase (254 aa).

Residues 1–250 (MERLEEARKR…LPPSPEDQAE (250 aa)) enclose the Deacetylase sirtuin-type domain. 22–41 (GAGISKPSGIPTFRDAEGLW) provides a ligand contact to NAD(+). Substrate-binding residues include Tyr66 and Arg69. Residue 104-107 (QNVD) participates in NAD(+) binding. His122 acts as the Proton acceptor in catalysis. Zn(2+) is bound by residues Cys130, Cys133, Cys149, and Cys152. NAD(+) is bound by residues 189 to 191 (GTS), 215 to 217 (NPE), and Ala233.

It belongs to the sirtuin family. Class III subfamily. Requires Zn(2+) as cofactor.

The protein localises to the cytoplasm. It carries out the reaction N(6)-acetyl-L-lysyl-[protein] + NAD(+) + H2O = 2''-O-acetyl-ADP-D-ribose + nicotinamide + L-lysyl-[protein]. The enzyme catalyses N(6)-succinyl-L-lysyl-[protein] + NAD(+) + H2O = 2''-O-succinyl-ADP-D-ribose + nicotinamide + L-lysyl-[protein]. Its function is as follows. NAD-dependent lysine deacetylase and desuccinylase that specifically removes acetyl and succinyl groups on target proteins. Modulates the activities of several proteins which are inactive in their acylated form. The chain is NAD-dependent protein deacylase from Thermus thermophilus (strain ATCC BAA-163 / DSM 7039 / HB27).